The chain runs to 159 residues: SsrA-binding protein (159 aa).

Positions 137 to 147 are enriched in basic and acidic residues; that stretch reads LAERQANRETE. A disordered region spans residues 137-159; it reads LAERQANRETEQAVGRRLKGMHD.

This sequence belongs to the SmpB family.

The protein resides in the cytoplasm. Required for rescue of stalled ribosomes mediated by trans-translation. Binds to transfer-messenger RNA (tmRNA), required for stable association of tmRNA with ribosomes. tmRNA and SmpB together mimic tRNA shape, replacing the anticodon stem-loop with SmpB. tmRNA is encoded by the ssrA gene; the 2 termini fold to resemble tRNA(Ala) and it encodes a 'tag peptide', a short internal open reading frame. During trans-translation Ala-aminoacylated tmRNA acts like a tRNA, entering the A-site of stalled ribosomes, displacing the stalled mRNA. The ribosome then switches to translate the ORF on the tmRNA; the nascent peptide is terminated with the 'tag peptide' encoded by the tmRNA and targeted for degradation. The ribosome is freed to recommence translation, which seems to be the essential function of trans-translation. This Nocardioides sp. (strain ATCC BAA-499 / JS614) protein is SsrA-binding protein.